The sequence spans 72 residues: uncharacterized protein (72 aa).

Over 1–12 (MSKHKHEWTESV) the chain is Cytoplasmic. Residues 13–32 (ANSGPASILSYCASSILMTV) traverse the membrane as a helical segment. Residues 33-46 (TNKFVVNLDNFNMN) are Lumenal-facing. A helical transmembrane segment spans residues 47-69 (FVMLFVQSLVCTVTLCILRIVGV). Residues 70 to 72 (ANF) lie on the Cytoplasmic side of the membrane.

It belongs to the TPT transporter family. SLC35D subfamily.

The protein localises to the membrane. This is an uncharacterized protein from Saccharomyces cerevisiae (strain RM11-1a) (Baker's yeast).